The chain runs to 962 residues: Glycine dehydrogenase (decarboxylating) (962 aa).

Lys709 carries the N6-(pyridoxal phosphate)lysine modification.

The protein belongs to the GcvP family. As to quaternary structure, the glycine cleavage system is composed of four proteins: P, T, L and H. Pyridoxal 5'-phosphate serves as cofactor.

It carries out the reaction N(6)-[(R)-lipoyl]-L-lysyl-[glycine-cleavage complex H protein] + glycine + H(+) = N(6)-[(R)-S(8)-aminomethyldihydrolipoyl]-L-lysyl-[glycine-cleavage complex H protein] + CO2. Functionally, the glycine cleavage system catalyzes the degradation of glycine. The P protein binds the alpha-amino group of glycine through its pyridoxal phosphate cofactor; CO(2) is released and the remaining methylamine moiety is then transferred to the lipoamide cofactor of the H protein. The chain is Glycine dehydrogenase (decarboxylating) from Shewanella baltica (strain OS223).